The chain runs to 841 residues: MSALQEIPSPISNMQTSNFAHVIFQNVAKSYLPNAPLECHYTLTQYIHPHPKDWVGIFKVGWSTPRDYFTFLWSLMPEKYVAESTCNCVLTFQGYYLPNDDGEFYQFCYVTHKGEIRGASTPFQFRASSPVDELLTMEDEGHSDMLVVTTKTGLLELKIEKTMKEKEELVKITTVLEKEVLQLREHVEGLESEFLREQKRSEQLSSEREELFNASEILRNESDEAKRKCKEMSAKIIQLEEDIMLVTQKAIAKETELDSLKDKLKKVVLEKDQLECQLKYEKDEKDLYKVHLKNTEIENTKLLTEVQTLKNLDTNKENLISHYKEELGKLQICLADKEKMNKELLQNSSNKEDIAFLKQQLRKLEDQHQASRQEVSLMSRELSEAVNKRDKTMADLHSARLDTDSVRMQLADALAQLSMRDEQQQKSNPFAKKDQGADNNRVEQELRKEVEDLKLRLQMAADHYKDKFKECQKLQKQVVKLTEQLKATENQQKERELFCATEAAAVTVMKQCTPPVSPFTSDSLPEFDIREQVREMSLEMAEKTEKYRKCKQMLAEEKARCSAYADDVAKMELKWKEQLKVNDSIKRQLIALDDQYKVQSAEKDREICDLSYSIETLRNEKAKMERFINDLEKKLEKQAGWAASNTQGLQFFNPYCDEHRLAPAIPAQQPLLQFGNPYASQETRDGADGAFNPDEVQGPPVRATSWGLEDKVVCSQPARNLSRPDGLEDPDENNAGLITKDEDDDDDDDNVNFEQTPDPTRIAMHDQSGFCFEAGYTMNKKCPLCPVSFPPNYDQGQFEAHVESHWKVCPMCNEQFPPDCDQQIFERHVQTHFDGSVLNFD.

Coiled-coil stretches lie at residues 173 to 560 (TTVL…EKAR) and 612 to 640 (YSIE…KQAG). Residues 419-441 (MRDEQQQKSNPFAKKDQGADNNR) are disordered. Over residues 431-441 (AKKDQGADNNR) the composition is skewed to basic and acidic residues. Residues 678–759 (YASQETRDGA…NVNFEQTPDP (82 aa)) are disordered. Over residues 741–751 (DEDDDDDDDNV) the composition is skewed to acidic residues. 2 consecutive UBZ1-type zinc fingers follow at residues 779 to 805 (NKKC…VESH) and 806 to 832 (WKVC…VQTH). Zn(2+) contacts are provided by C782, C785, H801, H805, C809, C812, H828, and H832.

Its function is as follows. May have an anti-apoptotic activity. The polypeptide is Tax1-binding protein 1 homolog (tax1bp1) (Xenopus tropicalis (Western clawed frog)).